The sequence spans 373 residues: Arfaptin-1 (373 aa).

Residues 1 to 47 (MAQESPKNSAAEIPVTSNGEVDDSREHSFNRDLKHSLPSGLGLSETQ) are disordered. An N-acetylalanine modification is found at Ala-2. A phosphoserine mark is found at Ser-5, Ser-28, Ser-36, Ser-39, Ser-69, Ser-79, and Ser-132. Over residues 22–35 (DDSREHSFNRDLKH) the composition is skewed to basic and acidic residues. Positions 153–353 (TVDLELEAQI…NQKQLEQTLK (201 aa)) constitute an AH domain. Residue Thr-361 is modified to Phosphothreonine.

Forms homodimers or heterodimers with ARFIP2. Interacts with non-myristoylated GTP-bound ARF3, but not to GDP-bound ARF3. Interacts with ARF1. Binds with lower affinity to ARF5 and with very little affinity to ARF6. Interacts with ARL1. Interacts with ATG9A. In terms of processing, phosphorylated by PRKD1; phosphorylation delocalizes ARFIP1 from the Golgi and disrupts its ability to inhibit the activity of ADP-ribosylation factor, an important component of the vesicle scission machinery. Ubiquitously expressed. Higher levels in liver, pancreas, placenta, skeletal muscle and heart.

It is found in the golgi apparatus. The protein localises to the trans-Golgi network membrane. Its function is as follows. Plays a role in controlling biogenesis of secretory granules at the trans-Golgi network. Mechanistically, binds ARF-GTP at the neck of a growing secretory granule precursor and forms a protective scaffold. Once the granule precursor has been completely loaded, active PRKD1 phosphorylates ARFIP1 and releases it from ARFs. In turn, ARFs induce fission. Through this mechanism, ensures proper secretory granule formation at the Golgi of pancreatic beta cells. This is Arfaptin-1 from Homo sapiens (Human).